A 321-amino-acid polypeptide reads, in one-letter code: Ribosomal RNA small subunit methyltransferase H (321 aa).

S-adenosyl-L-methionine is bound by residues 44 to 46, aspartate 64, phenylalanine 88, aspartate 109, and glutamine 116; that span reads GGH.

This sequence belongs to the methyltransferase superfamily. RsmH family.

Its subcellular location is the cytoplasm. It carries out the reaction cytidine(1402) in 16S rRNA + S-adenosyl-L-methionine = N(4)-methylcytidine(1402) in 16S rRNA + S-adenosyl-L-homocysteine + H(+). Its function is as follows. Specifically methylates the N4 position of cytidine in position 1402 (C1402) of 16S rRNA. In Methylobacillus flagellatus (strain ATCC 51484 / DSM 6875 / VKM B-1610 / KT), this protein is Ribosomal RNA small subunit methyltransferase H.